The primary structure comprises 90 residues: Probable Fe(2+)-trafficking protein (90 aa).

This sequence belongs to the Fe(2+)-trafficking protein family.

Could be a mediator in iron transactions between iron acquisition and iron-requiring processes, such as synthesis and/or repair of Fe-S clusters in biosynthetic enzymes. This Polaromonas sp. (strain JS666 / ATCC BAA-500) protein is Probable Fe(2+)-trafficking protein.